We begin with the raw amino-acid sequence, 156 residues long: ATP synthase subunit b (156 aa).

Residues 12–32 (VAFFIFVLFCMKFVWPPVIAA) form a helical membrane-spanning segment.

This sequence belongs to the ATPase B chain family. In terms of assembly, F-type ATPases have 2 components, F(1) - the catalytic core - and F(0) - the membrane proton channel. F(1) has five subunits: alpha(3), beta(3), gamma(1), delta(1), epsilon(1). F(0) has three main subunits: a(1), b(2) and c(10-14). The alpha and beta chains form an alternating ring which encloses part of the gamma chain. F(1) is attached to F(0) by a central stalk formed by the gamma and epsilon chains, while a peripheral stalk is formed by the delta and b chains.

It localises to the cell inner membrane. Its function is as follows. F(1)F(0) ATP synthase produces ATP from ADP in the presence of a proton or sodium gradient. F-type ATPases consist of two structural domains, F(1) containing the extramembraneous catalytic core and F(0) containing the membrane proton channel, linked together by a central stalk and a peripheral stalk. During catalysis, ATP synthesis in the catalytic domain of F(1) is coupled via a rotary mechanism of the central stalk subunits to proton translocation. Functionally, component of the F(0) channel, it forms part of the peripheral stalk, linking F(1) to F(0). In Pseudomonas paraeruginosa (strain DSM 24068 / PA7) (Pseudomonas aeruginosa (strain PA7)), this protein is ATP synthase subunit b.